Reading from the N-terminus, the 344-residue chain is MIELRNLSQRFPGPTGWVDALHNVNLTIPQGEVFGIIGRSGAGKSTLVRTINLLTRPTEGNVVVGGRDLTLLPAGALREARREIGMIFQHFNLLSSRTVFDNVALPLELAGAGRADIEAAVLPLLDLVGLSAQKDRYPAQISGGQKQRVGIARALASKPKVLLSDEATSALDPETTRSILDLLKRINRELGLTIVLITHQMEVIKQVCDRVAVLDAGRVVEEGRVIDVFLQPHHEVTRALIGDVIAQELPPALKARVAERLKTGSGHLLRLAFTGSGVDQPILSETIRRYELDFNILHGQIDEIQGQAFGSLAVLAGGEPGKVGQALAFLREQGVVVEELSYVE.

An ABC transporter domain is found at 2-241 (IELRNLSQRF…PHHEVTRALI (240 aa)). 38 to 45 (GRSGAGKS) lines the ATP pocket.

Belongs to the ABC transporter superfamily. Methionine importer (TC 3.A.1.24) family. The complex is composed of two ATP-binding proteins (MetN), two transmembrane proteins (MetI) and a solute-binding protein (MetQ).

The protein localises to the cell inner membrane. The catalysed reaction is L-methionine(out) + ATP + H2O = L-methionine(in) + ADP + phosphate + H(+). The enzyme catalyses D-methionine(out) + ATP + H2O = D-methionine(in) + ADP + phosphate + H(+). Part of the ABC transporter complex MetNIQ involved in methionine import. Responsible for energy coupling to the transport system. The protein is Methionine import ATP-binding protein MetN 1 of Burkholderia ambifaria (strain ATCC BAA-244 / DSM 16087 / CCUG 44356 / LMG 19182 / AMMD) (Burkholderia cepacia (strain AMMD)).